The following is a 298-amino-acid chain: Lipoyl synthase (298 aa).

Residues cysteine 40, cysteine 45, cysteine 51, cysteine 67, cysteine 71, cysteine 74, and serine 280 each coordinate [4Fe-4S] cluster. One can recognise a Radical SAM core domain in the interval 53 to 269 (AVRRTATFMI…KEIAMQKGFS (217 aa)).

The protein belongs to the radical SAM superfamily. Lipoyl synthase family. It depends on [4Fe-4S] cluster as a cofactor.

The protein localises to the cytoplasm. It carries out the reaction [[Fe-S] cluster scaffold protein carrying a second [4Fe-4S](2+) cluster] + N(6)-octanoyl-L-lysyl-[protein] + 2 oxidized [2Fe-2S]-[ferredoxin] + 2 S-adenosyl-L-methionine + 4 H(+) = [[Fe-S] cluster scaffold protein] + N(6)-[(R)-dihydrolipoyl]-L-lysyl-[protein] + 4 Fe(3+) + 2 hydrogen sulfide + 2 5'-deoxyadenosine + 2 L-methionine + 2 reduced [2Fe-2S]-[ferredoxin]. It functions in the pathway protein modification; protein lipoylation via endogenous pathway; protein N(6)-(lipoyl)lysine from octanoyl-[acyl-carrier-protein]. Functionally, catalyzes the radical-mediated insertion of two sulfur atoms into the C-6 and C-8 positions of the octanoyl moiety bound to the lipoyl domains of lipoate-dependent enzymes, thereby converting the octanoylated domains into lipoylated derivatives. This is Lipoyl synthase from Bacillus velezensis (strain DSM 23117 / BGSC 10A6 / LMG 26770 / FZB42) (Bacillus amyloliquefaciens subsp. plantarum).